The primary structure comprises 173 residues: Dual-action ribosomal maturation protein DarP (173 aa).

This sequence belongs to the DarP family.

Its subcellular location is the cytoplasm. Its function is as follows. Member of a network of 50S ribosomal subunit biogenesis factors which assembles along the 30S-50S interface, preventing incorrect 23S rRNA structures from forming. Promotes peptidyl transferase center (PTC) maturation. The chain is Dual-action ribosomal maturation protein DarP from Pseudomonas entomophila (strain L48).